An 80-amino-acid chain; its full sequence is Exodeoxyribonuclease 7 small subunit (80 aa).

This sequence belongs to the XseB family. As to quaternary structure, heterooligomer composed of large and small subunits.

It is found in the cytoplasm. The catalysed reaction is Exonucleolytic cleavage in either 5'- to 3'- or 3'- to 5'-direction to yield nucleoside 5'-phosphates.. Bidirectionally degrades single-stranded DNA into large acid-insoluble oligonucleotides, which are then degraded further into small acid-soluble oligonucleotides. This is Exodeoxyribonuclease 7 small subunit from Rickettsia akari (strain Hartford).